The following is a 370-amino-acid chain: Biotin synthase (370 aa).

Residues 56–283 (NAVQVSTLLS…KSHVRLSAGR (228 aa)) form the Radical SAM core domain. 3 residues coordinate [4Fe-4S] cluster: C71, C75, and C78. Positions 115, 146, 206, and 278 each coordinate [2Fe-2S] cluster. A compositionally biased stretch (basic and acidic residues) spans 327-344 (GLHPEPSDPHADDAHRDD). The interval 327-346 (GLHPEPSDPHADDAHRDDEQ) is disordered.

This sequence belongs to the radical SAM superfamily. Biotin synthase family. In terms of assembly, homodimer. [4Fe-4S] cluster is required as a cofactor. The cofactor is [2Fe-2S] cluster.

It carries out the reaction (4R,5S)-dethiobiotin + (sulfur carrier)-SH + 2 reduced [2Fe-2S]-[ferredoxin] + 2 S-adenosyl-L-methionine = (sulfur carrier)-H + biotin + 2 5'-deoxyadenosine + 2 L-methionine + 2 oxidized [2Fe-2S]-[ferredoxin]. It participates in cofactor biosynthesis; biotin biosynthesis; biotin from 7,8-diaminononanoate: step 2/2. Functionally, catalyzes the conversion of dethiobiotin (DTB) to biotin by the insertion of a sulfur atom into dethiobiotin via a radical-based mechanism. The chain is Biotin synthase from Chromohalobacter salexigens (strain ATCC BAA-138 / DSM 3043 / CIP 106854 / NCIMB 13768 / 1H11).